Here is a 280-residue protein sequence, read N- to C-terminus: Exfoliative toxin A (280 aa).

An N-terminal signal peptide occupies residues 1–38 (MNNSKIISKVLLSLSLFTVGASAFVIQDELMQKNHAKA). Catalysis depends on charge relay system residues His110, Asp158, and Ser233.

This sequence belongs to the peptidase S1B family. Ca(2+) serves as cofactor.

Has serine protease-like properties and binds to the skin protein profilaggrin. Cleaves substrates after acidic residues. Exfoliative toxins cause impetigous diseases commonly referred as staphylococcal scalded skin syndrome (SSSS). This Staphylococcus aureus protein is Exfoliative toxin A (eta).